Reading from the N-terminus, the 787-residue chain is Vacuolar protein sorting-associated protein 35A (787 aa).

Position 1 is an N-acetylmethionine (Met1).

It belongs to the VPS35 family. As to quaternary structure, component of the retromer complex which consists of VPS29 (MAG1), VPS26 (VPS26A or VPS26B), VPS35 (VPS35A or VPS35B or VPS35C), VPS5/17 (SNX1 or SNX2A or SNX2B). Component of a retromer subcomplex consisting of VPS29 (MAG1), VPS26 (VPS26A or VPS26B), VPS35 (VPS35A or VPS35B or VPS35C). Interacts with RABG3F.

The protein resides in the cytoplasm. Its subcellular location is the endosome membrane. It localises to the prevacuolar compartment membrane. It is found in the golgi apparatus. The protein localises to the trans-Golgi network membrane. Functionally, plays a role in vesicular protein sorting. Component of the membrane-associated retromer complex which is essential in endosome-to-Golgi retrograde transport. Also involved in the efficient sorting of seed storage proteins. Binds alone to endosomal membranes and is required for recruitment of VPS26 and VPS29 to membrane. The VPS29-VPS26-VPS35 subcomplex may be involved in recycling of specific cargos from endosome to the plasma membrane. This is Vacuolar protein sorting-associated protein 35A (VPS35A) from Arabidopsis thaliana (Mouse-ear cress).